Here is a 245-residue protein sequence, read N- to C-terminus: Biosynthetic peptidoglycan transglycosylase (245 aa).

The chain crosses the membrane as a helical span at residues 10-30 (FLALLFVVATLAQLWYLGQVL). Residues 224–245 (DPGTVPLPPPPEPTAPPEGNTQ) are disordered. The segment covering 226–239 (GTVPLPPPPEPTAP) has biased composition (pro residues).

It belongs to the glycosyltransferase 51 family.

It is found in the cell inner membrane. It carries out the reaction [GlcNAc-(1-&gt;4)-Mur2Ac(oyl-L-Ala-gamma-D-Glu-L-Lys-D-Ala-D-Ala)](n)-di-trans,octa-cis-undecaprenyl diphosphate + beta-D-GlcNAc-(1-&gt;4)-Mur2Ac(oyl-L-Ala-gamma-D-Glu-L-Lys-D-Ala-D-Ala)-di-trans,octa-cis-undecaprenyl diphosphate = [GlcNAc-(1-&gt;4)-Mur2Ac(oyl-L-Ala-gamma-D-Glu-L-Lys-D-Ala-D-Ala)](n+1)-di-trans,octa-cis-undecaprenyl diphosphate + di-trans,octa-cis-undecaprenyl diphosphate + H(+). The protein operates within cell wall biogenesis; peptidoglycan biosynthesis. Peptidoglycan polymerase that catalyzes glycan chain elongation from lipid-linked precursors. This Alcanivorax borkumensis (strain ATCC 700651 / DSM 11573 / NCIMB 13689 / SK2) protein is Biosynthetic peptidoglycan transglycosylase.